The following is a 364-amino-acid chain: Dihydroflavonol 4-reductase (364 aa).

2 residues coordinate NADP(+): K45 and Y164.

The protein belongs to the NAD(P)-dependent epimerase/dehydratase family. Dihydroflavonol-4-reductase subfamily.

It carries out the reaction a (2R,3S,4S)-leucoanthocyanidin + NADP(+) = a (2R,3R)-dihydroflavonol + NADPH + H(+). It catalyses the reaction (2S)-flavan-4-ol + NADP(+) = (2S)-flavanone + NADPH + H(+). Its pathway is pigment biosynthesis; anthocyanin biosynthesis. In terms of biological role, bifunctional enzyme involved in flavonoid metabolism. The chain is Dihydroflavonol 4-reductase (F) from Callistephus chinensis (China aster).